A 96-amino-acid polypeptide reads, in one-letter code: Myticin-B (96 aa).

Residues 1–20 form the signal peptide; that stretch reads MKATMLLAVVVAVFVAGTEA. The propeptide at 61-96 is removed in mature form; it reads VKFPFGATQDAKSMNELEYTPIMKSMENLDNGMDML.

In terms of processing, contains four disulfide bonds. In terms of tissue distribution, hemocytes.

The protein localises to the secreted. Its function is as follows. Bacteriolytic activity against Gram-positive bacteria M.luteus, B.megaterium and A.viridans and Gram-negative bacteria E.coli D31. Possesses antifungal activity against F.oxysporum. This is Myticin-B from Mytilus galloprovincialis (Mediterranean mussel).